The primary structure comprises 440 residues: Cell division protein DivIB (440 aa).

Positions 1 to 10 are enriched in basic and acidic residues; that stretch reads MMDDKTKNDQ. Disordered stretches follow at residues 1-97 and 123-154; these read MMDD…DSNI and QHQSAPNEQNSDSNDEETVTKKERKSKVTQLK. The Cytoplasmic portion of the chain corresponds to 1-174; sequence MMDDKTKNDQ…RRKRQKRIQY (174 aa). Over residues 12-21 the composition is skewed to acidic residues; the sequence is ESNEDKDELE. A compositionally biased stretch (basic residues) spans 27–39; that stretch reads TSKKRRQRKRSKA. Low complexity predominate over residues 78-87; sequence DSASSHANDN. Over residues 88 to 97 the composition is skewed to acidic residues; it reads NIDDSTDSNI. Residues 124-134 are compositionally biased toward polar residues; the sequence is HQSAPNEQNSD. The helical transmembrane segment at 175–195 threads the bilayer; the sequence is SVITILVLLIAVILIYMFSPL. A POTRA domain is found at 196–264; the sequence is SKIAHVNING…NTLNVDITEN (69 aa). Topologically, residues 196–440 are extracellular; that stretch reads SKIAHVNING…KINKQSSKNN (245 aa). Residues 397–440 are disordered; it reads YRGNTSTQSESDKNVTKSSQEENQAKEELQSVLNKINKQSSKNN. Over residues 406–425 the composition is skewed to basic and acidic residues; that stretch reads ESDKNVTKSSQEENQAKEEL. The span at 427 to 440 shows a compositional bias: polar residues; it reads SVLNKINKQSSKNN.

The protein belongs to the FtsQ/DivIB family. DivIB subfamily.

It localises to the cell membrane. Cell division protein that may be involved in stabilizing or promoting the assembly of the division complex. This is Cell division protein DivIB from Staphylococcus aureus (strain MRSA252).